A 61-amino-acid chain; its full sequence is Small ribosomal subunit protein uS14 (61 aa).

Positions 24, 27, 40, and 43 each coordinate Zn(2+).

This sequence belongs to the universal ribosomal protein uS14 family. Zinc-binding uS14 subfamily. Part of the 30S ribosomal subunit. Contacts proteins S3 and S10. The cofactor is Zn(2+).

In terms of biological role, binds 16S rRNA, required for the assembly of 30S particles and may also be responsible for determining the conformation of the 16S rRNA at the A site. The protein is Small ribosomal subunit protein uS14 of Anoxybacillus flavithermus (strain DSM 21510 / WK1).